We begin with the raw amino-acid sequence, 417 residues long: Argininosuccinate synthase (417 aa).

8-16 is an ATP binding site; sequence AYSGGLDTS. An L-citrulline-binding site is contributed by Tyr87. Gly117 is an ATP binding site. Thr119, Asn123, and Asp124 together coordinate L-aspartate. Asn123 provides a ligand contact to L-citrulline. Arg127, Ser175, Glu259, and Tyr271 together coordinate L-citrulline.

The protein belongs to the argininosuccinate synthase family. Type 1 subfamily. Homotetramer.

The protein resides in the cytoplasm. It catalyses the reaction L-citrulline + L-aspartate + ATP = 2-(N(omega)-L-arginino)succinate + AMP + diphosphate + H(+). It participates in amino-acid biosynthesis; L-arginine biosynthesis; L-arginine from L-ornithine and carbamoyl phosphate: step 2/3. The chain is Argininosuccinate synthase from Clavibacter sepedonicus (Clavibacter michiganensis subsp. sepedonicus).